The primary structure comprises 181 residues: Cyclic AMP-dependent transcription factor ATF-3 (181 aa).

The segment at 76–97 (VTKAEVAPEEDERKKRRRERNK) is disordered. A Glycyl lysine isopeptide (Lys-Gly) (interchain with G-Cter in SUMO2) cross-link involves residue K78. One can recognise a bZIP domain in the interval 86–149 (DERKKRRRER…QHLIYMLNLH (64 aa)). Residues 88-110 (RKKRRRERNKIAAAKCRNKKKEK) are basic motif. The interval 114-142 (LQKESEKLESVNAELKAQIEELKNEKQHL) is leucine-zipper. The residue at position 162 (T162) is a Phosphothreonine. Residue K175 forms a Glycyl lysine isopeptide (Lys-Gly) (interchain with G-Cter in SUMO2) linkage.

It belongs to the bZIP family. ATF subfamily. Binds DNA as a homodimer or a heterodimer. Interacts with KAT5; promoting KAT5 autoacetylation and KAT5 deubiquitination by USP7.

Its subcellular location is the nucleus. In terms of biological role, this protein binds the cAMP response element (CRE) (consensus: 5'-GTGACGT[AC][AG]-3'), a sequence present in many viral and cellular promoters. Represses transcription from promoters with ATF sites. It may repress transcription by stabilizing the binding of inhibitory cofactors at the promoter. This is Cyclic AMP-dependent transcription factor ATF-3 (ATF3) from Bos taurus (Bovine).